A 699-amino-acid chain; its full sequence is Bifunctional protein GAL10 (699 aa).

A galactowaldenase region spans residues 1–357 (MTAQLQSEST…TTENPFGYQL (357 aa)). 13 to 44 (IVLVTGGAGYIGSHTVVELIENGYDCVVADNL) is a binding site for NAD(+). A mutarotase region spans residues 358–699 (RGVEARFSAE…YGSKIVYRFS (342 aa)). The active-site For mutarotase activity is the H537. Position 562 is a phosphoserine (S562).

It in the N-terminal section; belongs to the NAD(P)-dependent epimerase/dehydratase family. In the C-terminal section; belongs to the aldose epimerase family. Requires NAD(+) as cofactor.

It catalyses the reaction UDP-alpha-D-glucose = UDP-alpha-D-galactose. The enzyme catalyses alpha-D-glucose = beta-D-glucose. It functions in the pathway carbohydrate metabolism; galactose metabolism. It participates in carbohydrate metabolism; hexose metabolism. Mutarotase converts alpha-aldose to the beta-anomer. It is active on D-glucose, L-arabinose, D-xylose, D-galactose, maltose and lactose. The sequence is that of Bifunctional protein GAL10 (GAL10) from Saccharomyces cerevisiae (strain ATCC 204508 / S288c) (Baker's yeast).